The chain runs to 1036 residues: Exportin-T (1036 aa).

This sequence belongs to the exportin family.

The protein localises to the nucleus. It localises to the cytoplasm. TRNA nucleus export receptor which facilitates tRNA translocation across the nuclear pore complex. Involved in pre-tRNA splicing, probably by affecting the interaction of pre-tRNA with splicing endonuclease. In Phaeosphaeria nodorum (strain SN15 / ATCC MYA-4574 / FGSC 10173) (Glume blotch fungus), this protein is Exportin-T (LOS1).